Consider the following 223-residue polypeptide: Phosphoribosylformylglycinamidine synthase subunit PurQ (223 aa).

In terms of domain architecture, Glutamine amidotransferase type-1 spans Phe3–Val223. Cys85 serves as the catalytic Nucleophile. Catalysis depends on residues His193 and Glu195.

In terms of assembly, part of the FGAM synthase complex composed of 1 PurL, 1 PurQ and 2 PurS subunits.

It is found in the cytoplasm. It carries out the reaction N(2)-formyl-N(1)-(5-phospho-beta-D-ribosyl)glycinamide + L-glutamine + ATP + H2O = 2-formamido-N(1)-(5-O-phospho-beta-D-ribosyl)acetamidine + L-glutamate + ADP + phosphate + H(+). The catalysed reaction is L-glutamine + H2O = L-glutamate + NH4(+). The protein operates within purine metabolism; IMP biosynthesis via de novo pathway; 5-amino-1-(5-phospho-D-ribosyl)imidazole from N(2)-formyl-N(1)-(5-phospho-D-ribosyl)glycinamide: step 1/2. Its function is as follows. Part of the phosphoribosylformylglycinamidine synthase complex involved in the purines biosynthetic pathway. Catalyzes the ATP-dependent conversion of formylglycinamide ribonucleotide (FGAR) and glutamine to yield formylglycinamidine ribonucleotide (FGAM) and glutamate. The FGAM synthase complex is composed of three subunits. PurQ produces an ammonia molecule by converting glutamine to glutamate. PurL transfers the ammonia molecule to FGAR to form FGAM in an ATP-dependent manner. PurS interacts with PurQ and PurL and is thought to assist in the transfer of the ammonia molecule from PurQ to PurL. This Staphylococcus epidermidis (strain ATCC 35984 / DSM 28319 / BCRC 17069 / CCUG 31568 / BM 3577 / RP62A) protein is Phosphoribosylformylglycinamidine synthase subunit PurQ.